A 413-amino-acid polypeptide reads, in one-letter code: 1-deoxy-D-xylulose 5-phosphate reductoisomerase (413 aa).

NADPH is bound by residues Thr-13, Gly-14, Ser-15, Ile-16, Lys-40, Asn-41, and Asn-127. Residue Lys-128 coordinates 1-deoxy-D-xylulose 5-phosphate. Glu-129 contributes to the NADPH binding site. Asp-153 lines the Mn(2+) pocket. 1-deoxy-D-xylulose 5-phosphate-binding residues include Ser-154, Glu-155, Ser-184, and His-207. Glu-155 contributes to the Mn(2+) binding site. An NADPH-binding site is contributed by Gly-213. Positions 220, 225, 226, and 229 each coordinate 1-deoxy-D-xylulose 5-phosphate. Glu-229 lines the Mn(2+) pocket.

It belongs to the DXR family. The cofactor is Mg(2+). Mn(2+) is required as a cofactor.

It catalyses the reaction 2-C-methyl-D-erythritol 4-phosphate + NADP(+) = 1-deoxy-D-xylulose 5-phosphate + NADPH + H(+). Its pathway is isoprenoid biosynthesis; isopentenyl diphosphate biosynthesis via DXP pathway; isopentenyl diphosphate from 1-deoxy-D-xylulose 5-phosphate: step 1/6. Catalyzes the NADPH-dependent rearrangement and reduction of 1-deoxy-D-xylulose-5-phosphate (DXP) to 2-C-methyl-D-erythritol 4-phosphate (MEP). In Nitrosomonas eutropha (strain DSM 101675 / C91 / Nm57), this protein is 1-deoxy-D-xylulose 5-phosphate reductoisomerase.